The sequence spans 285 residues: Sulfotransferase 2A6 (285 aa).

44–49 is a 3'-phosphoadenylyl sulfate binding site; it reads KSGTNW. Catalysis depends on His99, which acts as the Proton acceptor. 3'-phosphoadenylyl sulfate-binding positions include Arg121, Ser129, Tyr184, 218–223, and 247–249; these read SSFQAM and RKG.

It belongs to the sulfotransferase 1 family. In terms of assembly, oligomer.

The protein resides in the cytoplasm. It is found in the cytosol. The enzyme catalyses an alcohol + 3'-phosphoadenylyl sulfate = an alkyl sulfate + adenosine 3',5'-bisphosphate + H(+). It catalyses the reaction glycolithocholate + 3'-phosphoadenylyl sulfate = sulfoglycolithocholate + adenosine 3',5'-bisphosphate + H(+). The catalysed reaction is taurolithocholate + 3'-phosphoadenylyl sulfate = taurolithocholate 3-sulfate + adenosine 3',5'-bisphosphate + H(+). It carries out the reaction 3beta-hydroxyandrost-5-en-17-one + 3'-phosphoadenylyl sulfate = dehydroepiandrosterone 3-sulfate + adenosine 3',5'-bisphosphate + H(+). Its function is as follows. Sulfotransferase that utilizes 3'-phospho-5'-adenylyl sulfate (PAPS) as sulfonate donor to catalyze the sulfonation of the hydroxyl group of hydroxysteroids and bile acids. The polypeptide is Sulfotransferase 2A6 (Mus musculus (Mouse)).